The primary structure comprises 284 residues: tRNA uridine(34) hydroxylase (284 aa).

Positions 132–226 constitute a Rhodanese domain; sequence AGRPVVMLDT…YFEEVGGAHY (95 aa). The Cysteine persulfide intermediate role is filled by C186.

It belongs to the TrhO family.

It carries out the reaction uridine(34) in tRNA + AH2 + O2 = 5-hydroxyuridine(34) in tRNA + A + H2O. Catalyzes oxygen-dependent 5-hydroxyuridine (ho5U) modification at position 34 in tRNAs. This chain is tRNA uridine(34) hydroxylase, found in Burkholderia ambifaria (strain MC40-6).